The chain runs to 302 residues: uncharacterized protein (302 aa).

Glutamate 47 is an active-site residue.

The protein belongs to the PhzF family.

This is an uncharacterized protein from Mesorhizobium japonicum (strain LMG 29417 / CECT 9101 / MAFF 303099) (Mesorhizobium loti (strain MAFF 303099)).